Reading from the N-terminus, the 261-residue chain is Indole-3-glycerol phosphate synthase (261 aa).

It belongs to the TrpC family.

It carries out the reaction 1-(2-carboxyphenylamino)-1-deoxy-D-ribulose 5-phosphate + H(+) = (1S,2R)-1-C-(indol-3-yl)glycerol 3-phosphate + CO2 + H2O. Its pathway is amino-acid biosynthesis; L-tryptophan biosynthesis; L-tryptophan from chorismate: step 4/5. This Burkholderia cenocepacia (strain HI2424) protein is Indole-3-glycerol phosphate synthase.